Consider the following 226-residue polypeptide: Leucyl/phenylalanyl-tRNA--protein transferase (226 aa).

The protein belongs to the L/F-transferase family.

It localises to the cytoplasm. It catalyses the reaction N-terminal L-lysyl-[protein] + L-leucyl-tRNA(Leu) = N-terminal L-leucyl-L-lysyl-[protein] + tRNA(Leu) + H(+). It carries out the reaction N-terminal L-arginyl-[protein] + L-leucyl-tRNA(Leu) = N-terminal L-leucyl-L-arginyl-[protein] + tRNA(Leu) + H(+). The enzyme catalyses L-phenylalanyl-tRNA(Phe) + an N-terminal L-alpha-aminoacyl-[protein] = an N-terminal L-phenylalanyl-L-alpha-aminoacyl-[protein] + tRNA(Phe). Functions in the N-end rule pathway of protein degradation where it conjugates Leu, Phe and, less efficiently, Met from aminoacyl-tRNAs to the N-termini of proteins containing an N-terminal arginine or lysine. In Azotobacter vinelandii (strain DJ / ATCC BAA-1303), this protein is Leucyl/phenylalanyl-tRNA--protein transferase.